Consider the following 1226-residue polypeptide: uncharacterized protein (1226 aa).

Belongs to the Mg-chelatase subunit H family.

This is an uncharacterized protein from Methanocaldococcus jannaschii (strain ATCC 43067 / DSM 2661 / JAL-1 / JCM 10045 / NBRC 100440) (Methanococcus jannaschii).